Here is a 396-residue protein sequence, read N- to C-terminus: Smad nuclear-interacting protein 1 (396 aa).

Over residues 1–10 (MKAVKSERER) the composition is skewed to basic and acidic residues. The disordered stretch occupies residues 1 to 227 (MKAVKSERER…VPAKEKPSFE (227 aa)). K30 is covalently cross-linked (Glycyl lysine isopeptide (Lys-Gly) (interchain with G-Cter in SUMO); alternate). K30 is covalently cross-linked (Glycyl lysine isopeptide (Lys-Gly) (interchain with G-Cter in SUMO1); alternate). Residue K30 forms a Glycyl lysine isopeptide (Lys-Gly) (interchain with G-Cter in SUMO2); alternate linkage. A phosphoserine mark is found at S35, S49, S52, and S54. T57 carries the post-translational modification Phosphothreonine. Phosphoserine occurs at positions 58 and 99. Basic residues predominate over residues 77–105 (PPKKKNKASGRRSKSPRSKRNRSPHHSTV). Over residues 107-142 (VKQEREDHPRRGREDRQHREPSEQEHRRARNSDRDR) the composition is skewed to basic and acidic residues. K108 is covalently cross-linked (Glycyl lysine isopeptide (Lys-Gly) (interchain with G-Cter in SUMO2)). The residue at position 153 (S153) is a Phosphoserine. A coiled-coil region spans residues 165 to 196 (RDRDTQNLQAQEEEREFYNARRREHRQRNDVG). S202 is subject to Phosphoserine. The span at 213 to 225 (NKEKEVPAKEKPS) shows a compositional bias: basic and acidic residues. K223 is covalently cross-linked (Glycyl lysine isopeptide (Lys-Gly) (interchain with G-Cter in SUMO2)). The region spanning 281–344 (YLLGRHRRIA…NGTFLNNKRI (64 aa)) is the FHA domain. The segment covering 373 to 382 (SSDTSEIDRK) has biased composition (basic and acidic residues). The disordered stretch occupies residues 373–396 (SSDTSEIDRKDDEDEEEEEEVSDS). A compositionally biased stretch (acidic residues) spans 383 to 396 (DDEDEEEEEEVSDS). A Phosphoserine modification is found at S394.

Component of activated spliceosome complexes. Component of the minor spliceosome, which splices U12-type introns. Binds SMAD4 and CREBBP/EP300. Binds the SMAD1/OAZ1/PSMB4 complex. Interacts with DROSHA and SMARCA4. Component of the SNARP complex which consists at least of SNIP1, SNW1, THRAP3, BCLAF1 and PNN. Post-translationally, degraded by the proteasome upon binding to the SMAD1/OAZ1/PSMB4 complex. As to expression, ubiquitous, with highest expression in heart and skeletal muscle.

The protein resides in the nucleus. Functionally, required for pre-mRNA splicing as component of the spliceosome. As a component of the minor spliceosome, involved in the splicing of U12-type introns in pre-mRNAs. Down-regulates NF-kappa-B signaling by competing with RELA for CREBBP/EP300 binding. Involved in the microRNA (miRNA) biogenesis. May be involved in cyclin-D1/CCND1 mRNA stability through the SNARP complex which associates with both the 3'end of the CCND1 gene and its mRNA. The chain is Smad nuclear-interacting protein 1 (SNIP1) from Homo sapiens (Human).